Reading from the N-terminus, the 260-residue chain is Putative ABC transporter ATP-binding protein SCO3161 (260 aa).

The ABC transporter domain maps to Leu16 to Glu246. Gly49–Thr56 contacts ATP.

It belongs to the ABC transporter superfamily.

It localises to the cell membrane. In terms of biological role, probably part of an ABC transporter complex. Responsible for energy coupling to the transport system. This is Putative ABC transporter ATP-binding protein SCO3161 from Streptomyces coelicolor (strain ATCC BAA-471 / A3(2) / M145).